We begin with the raw amino-acid sequence, 75 residues long: Psi-conotoxin PIIIE (75 aa).

Positions 1-19 (MSKLGALLTICLLLFPITA) are cleaved as a signal peptide. Positions 20 to 50 (LLMDGDQPADRPAERMDYDISSEVHRLLERR) are excised as a propeptide. Residues Pro-52, Pro-53, and Pro-64 each carry the 4-hydroxyproline modification. Cystine bridges form between Cys-54–Cys-66, Cys-55–Cys-71, and Cys-60–Cys-72. The residue at position 74 (Gly-74) is a Glycine amide.

In terms of tissue distribution, expressed by the venom duct.

Its subcellular location is the secreted. Functionally, psi-conotoxins act on postsynaptic membranes, and act as non-competitive antagonist of nicotinic acetylcholine receptors (nAChR). Is more toxic than Psi-conotoxin PIIIF. In vivo, has paralytic activity when injected intraperitoneally into goldfish. The chain is Psi-conotoxin PIIIE from Conus purpurascens (Purple cone).